A 246-amino-acid chain; its full sequence is Probable transcriptional regulatory protein CLK_2466 (246 aa).

Belongs to the TACO1 family.

The protein resides in the cytoplasm. In Clostridium botulinum (strain Loch Maree / Type A3), this protein is Probable transcriptional regulatory protein CLK_2466.